Consider the following 607-residue polypeptide: Replication factor C large subunit (607 aa).

55–62 serves as a coordination point for ATP; that stretch reads GPAGIGKT. Residues 468 to 607 are disordered; the sequence is EEEKPQKEGS…PKNQKTLFDF (140 aa). Positions 506-518 are enriched in basic and acidic residues; sequence TSEKKENSEKKEN. Residues 548-558 show a composition bias toward polar residues; that stretch reads SESVEQKTSSK.

Belongs to the activator 1 small subunits family. RfcL subfamily. Heteromultimer composed of small subunits (RfcS) and large subunits (RfcL).

In terms of biological role, part of the RFC clamp loader complex which loads the PCNA sliding clamp onto DNA. The polypeptide is Replication factor C large subunit (Methanosarcina acetivorans (strain ATCC 35395 / DSM 2834 / JCM 12185 / C2A)).